A 253-amino-acid polypeptide reads, in one-letter code: Large ribosomal subunit protein uL4 (253 aa).

Positions 61–107 (GWGSGRGTSHVPRLVNSSRAARVPHARGGRRAHPPKPEADRSEKVNT) are disordered. Basic residues predominate over residues 82-94 (RVPHARGGRRAHP). Residues 95–107 (PKPEADRSEKVNT) show a composition bias toward basic and acidic residues.

It belongs to the universal ribosomal protein uL4 family. As to quaternary structure, part of the 50S ribosomal subunit.

In terms of biological role, one of the primary rRNA binding proteins, this protein initially binds near the 5'-end of the 23S rRNA. It is important during the early stages of 50S assembly. It makes multiple contacts with different domains of the 23S rRNA in the assembled 50S subunit and ribosome. Its function is as follows. Forms part of the polypeptide exit tunnel. This chain is Large ribosomal subunit protein uL4, found in Methanosarcina barkeri (strain Fusaro / DSM 804).